Reading from the N-terminus, the 66-residue chain is Large ribosomal subunit protein bL33c (66 aa).

The protein belongs to the bacterial ribosomal protein bL33 family.

It is found in the plastid. Its subcellular location is the chloroplast. This is Large ribosomal subunit protein bL33c from Ceratophyllum demersum (Rigid hornwort).